Here is a 232-residue protein sequence, read N- to C-terminus: Triosephosphate isomerase (232 aa).

6 to 8 is a substrate binding site; it reads NLK. Histidine 91 (electrophile) is an active-site residue. Glutamate 158 (proton acceptor) is an active-site residue. Substrate-binding residues include glycine 164 and serine 194.

It belongs to the triosephosphate isomerase family. Homodimer.

Its subcellular location is the cytoplasm. The enzyme catalyses D-glyceraldehyde 3-phosphate = dihydroxyacetone phosphate. It participates in carbohydrate biosynthesis; gluconeogenesis. It functions in the pathway carbohydrate degradation; glycolysis; D-glyceraldehyde 3-phosphate from glycerone phosphate: step 1/1. In terms of biological role, involved in the gluconeogenesis. Catalyzes stereospecifically the conversion of dihydroxyacetone phosphate (DHAP) to D-glyceraldehyde-3-phosphate (G3P). The protein is Triosephosphate isomerase of Campylobacter hominis (strain ATCC BAA-381 / DSM 21671 / CCUG 45161 / LMG 19568 / NCTC 13146 / CH001A).